We begin with the raw amino-acid sequence, 828 residues long: Periplasmic nitrate reductase (828 aa).

The tat-type signal signal peptide spans 1–31 (MKLSRRSFMKANAVAAAAAAAGLSVPGVARA). The 4Fe-4S Mo/W bis-MGD-type domain occupies 39 to 95 (IKWDKAPCRFCGTGCGVLVGTQQGRVVACQGDPDAPVNRGLNCIKGYFLPKIMYGKD). [4Fe-4S] cluster is bound by residues C46, C49, C53, and C81. Residues K83, Q150, N175, C179, 212–219 (WGANMAEM), 243–247 (STYQH), 262–264 (QSD), M372, Q376, N482, 508–509 (SD), K531, D558, and 718–727 (TGRVLEHWHT) each bind Mo-bis(molybdopterin guanine dinucleotide). Residue F794 coordinates substrate. Mo-bis(molybdopterin guanine dinucleotide) contacts are provided by N802 and K819.

The protein belongs to the prokaryotic molybdopterin-containing oxidoreductase family. NasA/NapA/NarB subfamily. In terms of assembly, component of the periplasmic nitrate reductase NapAB complex composed of NapA and NapB. [4Fe-4S] cluster is required as a cofactor. Mo-bis(molybdopterin guanine dinucleotide) serves as cofactor. Predicted to be exported by the Tat system. The position of the signal peptide cleavage has not been experimentally proven.

It localises to the periplasm. It catalyses the reaction 2 Fe(II)-[cytochrome] + nitrate + 2 H(+) = 2 Fe(III)-[cytochrome] + nitrite + H2O. In terms of biological role, catalytic subunit of the periplasmic nitrate reductase complex NapAB. Receives electrons from NapB and catalyzes the reduction of nitrate to nitrite. This is Periplasmic nitrate reductase from Escherichia coli O157:H7 (strain EC4115 / EHEC).